Here is a 157-residue protein sequence, read N- to C-terminus: Protein PEROXIN-4 (157 aa).

The UBC core domain maps to 3 to 153 (ASRARLFKEY…AQMYTRLAAM (151 aa)). The active-site Glycyl thioester intermediate is Cys-90.

The protein belongs to the ubiquitin-conjugating enzyme family. As to quaternary structure, interacts with PEX22.

It localises to the peroxisome membrane. It carries out the reaction S-ubiquitinyl-[E1 ubiquitin-activating enzyme]-L-cysteine + [E2 ubiquitin-conjugating enzyme]-L-cysteine = [E1 ubiquitin-activating enzyme]-L-cysteine + S-ubiquitinyl-[E2 ubiquitin-conjugating enzyme]-L-cysteine.. It participates in protein modification; protein ubiquitination. Required for peroxisome biogenesis. Necessary for the developmental elimination of obsolete peroxisome matrix proteins. May be involved in the ubiquitination of PEX5, targeting it for recycling. Accepts the ubiquitin from the E1 complex and catalyzes its covalent attachment to other proteins. This is Protein PEROXIN-4 (PEX4) from Arabidopsis thaliana (Mouse-ear cress).